The sequence spans 228 residues: uncharacterized protein (228 aa).

Residues 90 to 115 (TDESEESSSANNTTTTASHTLSNSKK) are disordered. Residues 96 to 113 (SSSANNTTTTASHTLSNS) are compositionally biased toward low complexity.

It localises to the cytoplasm. Its subcellular location is the cell cortex. Functionally, deletion results in antifungal drug fluconazole-resistant phenotype. This is an uncharacterized protein from Saccharomyces cerevisiae (strain ATCC 204508 / S288c) (Baker's yeast).